A 182-amino-acid polypeptide reads, in one-letter code: Protein GrpE (182 aa).

The span at 1–17 (MEEKKRCEESEKIKEQE) shows a compositional bias: basic and acidic residues. A disordered region spans residues 1-33 (MEEKKRCEESEKIKEQENETLPNEDSPSMGKKV).

It belongs to the GrpE family. In terms of assembly, homodimer.

Its subcellular location is the cytoplasm. Functionally, participates actively in the response to hyperosmotic and heat shock by preventing the aggregation of stress-denatured proteins, in association with DnaK and GrpE. It is the nucleotide exchange factor for DnaK and may function as a thermosensor. Unfolded proteins bind initially to DnaJ; upon interaction with the DnaJ-bound protein, DnaK hydrolyzes its bound ATP, resulting in the formation of a stable complex. GrpE releases ADP from DnaK; ATP binding to DnaK triggers the release of the substrate protein, thus completing the reaction cycle. Several rounds of ATP-dependent interactions between DnaJ, DnaK and GrpE are required for fully efficient folding. This chain is Protein GrpE, found in Borrelia hermsii (strain HS1 / DAH).